Consider the following 231-residue polypeptide: Phosphoglycolate phosphatase (231 aa).

The active-site Nucleophile is the Asp-9. Mg(2+) is bound by residues Asp-9 and Asp-11. Lys-154 is a substrate binding site. Residues Asp-177 and Asp-181 each contribute to the Mg(2+) site.

Belongs to the archaeal SPP-like hydrolase family. It depends on Mg(2+) as a cofactor.

The catalysed reaction is 2-phosphoglycolate + H2O = glycolate + phosphate. Functionally, catalyzes the dephosphorylation of 2-phosphoglycolate. The chain is Phosphoglycolate phosphatase from Pyrococcus furiosus (strain ATCC 43587 / DSM 3638 / JCM 8422 / Vc1).